The chain runs to 179 residues: Adenine phosphoribosyltransferase (179 aa).

It belongs to the purine/pyrimidine phosphoribosyltransferase family. As to quaternary structure, homodimer.

Its subcellular location is the cytoplasm. It carries out the reaction AMP + diphosphate = 5-phospho-alpha-D-ribose 1-diphosphate + adenine. Its pathway is purine metabolism; AMP biosynthesis via salvage pathway; AMP from adenine: step 1/1. Catalyzes a salvage reaction resulting in the formation of AMP, that is energically less costly than de novo synthesis. This chain is Adenine phosphoribosyltransferase, found in Ruegeria pomeroyi (strain ATCC 700808 / DSM 15171 / DSS-3) (Silicibacter pomeroyi).